Here is a 127-residue protein sequence, read N- to C-terminus: Mediator of RNA polymerase II transcription subunit 9 (127 aa).

A coiled-coil region spans residues 95-119; it reads QKEQEIEAKKRVHRQLRQRVEEIAG.

The protein belongs to the Mediator complex subunit 9 family. As to quaternary structure, component of the Mediator complex.

It is found in the nucleus. Functionally, component of the Mediator complex, a coactivator involved in the regulated transcription of nearly all RNA polymerase II-dependent genes. Mediator functions as a bridge to convey information from gene-specific regulatory proteins to the basal RNA polymerase II transcription machinery. Mediator is recruited to promoters by direct interactions with regulatory proteins and serves as a scaffold for the assembly of a functional preinitiation complex with RNA polymerase II and the general transcription factors. The chain is Mediator of RNA polymerase II transcription subunit 9 (CSE2) from Eremothecium gossypii (strain ATCC 10895 / CBS 109.51 / FGSC 9923 / NRRL Y-1056) (Yeast).